Consider the following 75-residue polypeptide: uncharacterized protein (75 aa).

A helical membrane pass occupies residues 4-26 (PSLLFLGFSGVLAFGEVGWVGVY).

The protein resides in the membrane. This is an uncharacterized protein from Treponema pallidum (strain Nichols).